We begin with the raw amino-acid sequence, 379 residues long: tRNA(Met) cytidine acetate ligase (379 aa).

Residues 8–21, Gly-97, Asn-153, and Arg-176 contribute to the ATP site; that span reads IAEF…HEYL.

It belongs to the TmcAL family.

Its subcellular location is the cytoplasm. It catalyses the reaction cytidine(34) in elongator tRNA(Met) + acetate + ATP = N(4)-acetylcytidine(34) in elongator tRNA(Met) + AMP + diphosphate. In terms of biological role, catalyzes the formation of N(4)-acetylcytidine (ac(4)C) at the wobble position of elongator tRNA(Met), using acetate and ATP as substrates. First activates an acetate ion to form acetyladenylate (Ac-AMP) and then transfers the acetyl group to tRNA to form ac(4)C34. This Lactococcus lactis subsp. cremoris (strain MG1363) protein is tRNA(Met) cytidine acetate ligase.